We begin with the raw amino-acid sequence, 66 residues long: Large ribosomal subunit protein bL33c (66 aa).

Belongs to the bacterial ribosomal protein bL33 family.

The protein localises to the plastid. It localises to the chloroplast. The chain is Large ribosomal subunit protein bL33c from Platanus occidentalis (Sycamore).